We begin with the raw amino-acid sequence, 336 residues long: Holliday junction branch migration complex subunit RuvB (336 aa).

Residues 2–186 are large ATPase domain (RuvB-L); sequence QDQEEERMIT…FGVICKLELY (185 aa). ATP-binding positions include Leu-25, Arg-26, Gly-67, Lys-70, Thr-71, Thr-72, 133-135, Arg-176, Tyr-186, and Arg-223; that span reads EDF. Thr-71 serves as a coordination point for Mg(2+). The small ATPAse domain (RuvB-S) stretch occupies residues 187–257; the sequence is NNKQLTAIVK…VAEEALILLE (71 aa). Positions 260 to 336 are head domain (RuvB-H); it reads SLGLDNTDKK…YEHFNIPSAE (77 aa). The DNA site is built by Arg-296, Arg-315, and Arg-320.

The protein belongs to the RuvB family. Homohexamer. Forms an RuvA(8)-RuvB(12)-Holliday junction (HJ) complex. HJ DNA is sandwiched between 2 RuvA tetramers; dsDNA enters through RuvA and exits via RuvB. An RuvB hexamer assembles on each DNA strand where it exits the tetramer. Each RuvB hexamer is contacted by two RuvA subunits (via domain III) on 2 adjacent RuvB subunits; this complex drives branch migration. In the full resolvosome a probable DNA-RuvA(4)-RuvB(12)-RuvC(2) complex forms which resolves the HJ.

The protein resides in the cytoplasm. It catalyses the reaction ATP + H2O = ADP + phosphate + H(+). The RuvA-RuvB-RuvC complex processes Holliday junction (HJ) DNA during genetic recombination and DNA repair, while the RuvA-RuvB complex plays an important role in the rescue of blocked DNA replication forks via replication fork reversal (RFR). RuvA specifically binds to HJ cruciform DNA, conferring on it an open structure. The RuvB hexamer acts as an ATP-dependent pump, pulling dsDNA into and through the RuvAB complex. RuvB forms 2 homohexamers on either side of HJ DNA bound by 1 or 2 RuvA tetramers; 4 subunits per hexamer contact DNA at a time. Coordinated motions by a converter formed by DNA-disengaged RuvB subunits stimulates ATP hydrolysis and nucleotide exchange. Immobilization of the converter enables RuvB to convert the ATP-contained energy into a lever motion, pulling 2 nucleotides of DNA out of the RuvA tetramer per ATP hydrolyzed, thus driving DNA branch migration. The RuvB motors rotate together with the DNA substrate, which together with the progressing nucleotide cycle form the mechanistic basis for DNA recombination by continuous HJ branch migration. Branch migration allows RuvC to scan DNA until it finds its consensus sequence, where it cleaves and resolves cruciform DNA. The chain is Holliday junction branch migration complex subunit RuvB from Alkaliphilus metalliredigens (strain QYMF).